Here is a 187-residue protein sequence, read N- to C-terminus: Peptide deformylase 1 (187 aa).

2 residues coordinate Fe cation: C107 and H149. E150 is a catalytic residue. H153 serves as a coordination point for Fe cation.

Belongs to the polypeptide deformylase family. The cofactor is Fe(2+).

It carries out the reaction N-terminal N-formyl-L-methionyl-[peptide] + H2O = N-terminal L-methionyl-[peptide] + formate. Functionally, removes the formyl group from the N-terminal Met of newly synthesized proteins. Requires at least a dipeptide for an efficient rate of reaction. N-terminal L-methionine is a prerequisite for activity but the enzyme has broad specificity at other positions. The sequence is that of Peptide deformylase 1 from Nostoc sp. (strain PCC 7120 / SAG 25.82 / UTEX 2576).